The primary structure comprises 207 residues: 3-demethoxyubiquinol 3-hydroxylase (207 aa).

The Fe cation site is built by Glu-56, Glu-86, His-89, Glu-138, Glu-170, and His-173.

This sequence belongs to the COQ7 family. The cofactor is Fe cation.

It localises to the cell membrane. It carries out the reaction a 5-methoxy-2-methyl-3-(all-trans-polyprenyl)benzene-1,4-diol + AH2 + O2 = a 3-demethylubiquinol + A + H2O. It participates in cofactor biosynthesis; ubiquinone biosynthesis. In terms of biological role, catalyzes the hydroxylation of 2-nonaprenyl-3-methyl-6-methoxy-1,4-benzoquinol during ubiquinone biosynthesis. The chain is 3-demethoxyubiquinol 3-hydroxylase from Cupriavidus necator (strain ATCC 17699 / DSM 428 / KCTC 22496 / NCIMB 10442 / H16 / Stanier 337) (Ralstonia eutropha).